We begin with the raw amino-acid sequence, 159 residues long: Ribosomal RNA large subunit methyltransferase H (159 aa).

S-adenosyl-L-methionine-binding positions include leucine 76, glycine 107, and 126–131; that span reads LSSLTL.

Belongs to the RNA methyltransferase RlmH family. Homodimer.

Its subcellular location is the cytoplasm. The enzyme catalyses pseudouridine(1915) in 23S rRNA + S-adenosyl-L-methionine = N(3)-methylpseudouridine(1915) in 23S rRNA + S-adenosyl-L-homocysteine + H(+). Functionally, specifically methylates the pseudouridine at position 1915 (m3Psi1915) in 23S rRNA. The sequence is that of Ribosomal RNA large subunit methyltransferase H from Cupriavidus pinatubonensis (strain JMP 134 / LMG 1197) (Cupriavidus necator (strain JMP 134)).